A 158-amino-acid chain; its full sequence is 6,7-dimethyl-8-ribityllumazine synthase (158 aa).

5-amino-6-(D-ribitylamino)uracil-binding positions include Phe-22, 57-59 (AVE), and 81-83 (AVI). Position 86–87 (86–87 (GT)) interacts with (2S)-2-hydroxy-3-oxobutyl phosphate. His-89 acts as the Proton donor in catalysis. Phe-114 lines the 5-amino-6-(D-ribitylamino)uracil pocket. Arg-128 contacts (2S)-2-hydroxy-3-oxobutyl phosphate.

Belongs to the DMRL synthase family. In terms of assembly, forms an icosahedral capsid composed of 60 subunits, arranged as a dodecamer of pentamers.

The catalysed reaction is (2S)-2-hydroxy-3-oxobutyl phosphate + 5-amino-6-(D-ribitylamino)uracil = 6,7-dimethyl-8-(1-D-ribityl)lumazine + phosphate + 2 H2O + H(+). It participates in cofactor biosynthesis; riboflavin biosynthesis; riboflavin from 2-hydroxy-3-oxobutyl phosphate and 5-amino-6-(D-ribitylamino)uracil: step 1/2. Functionally, catalyzes the formation of 6,7-dimethyl-8-ribityllumazine by condensation of 5-amino-6-(D-ribitylamino)uracil with 3,4-dihydroxy-2-butanone 4-phosphate. This is the penultimate step in the biosynthesis of riboflavin. This is 6,7-dimethyl-8-ribityllumazine synthase from Shewanella piezotolerans (strain WP3 / JCM 13877).